The sequence spans 198 residues: Phosphoheptose isomerase (198 aa).

The region spanning 40 to 198 (IIGALRGGHK…IEAALMQDAR (159 aa)) is the SIS domain. 55-57 (NGG) serves as a coordination point for substrate. Zn(2+) is bound by residues histidine 64 and glutamate 68. Substrate-binding positions include glutamate 68, 97–98 (ND), 123–125 (STS), serine 128, and glutamine 175. 2 residues coordinate Zn(2+): glutamine 175 and histidine 183.

The protein belongs to the SIS family. GmhA subfamily. Homotetramer. It depends on Zn(2+) as a cofactor.

It localises to the cytoplasm. The enzyme catalyses 2 D-sedoheptulose 7-phosphate = D-glycero-alpha-D-manno-heptose 7-phosphate + D-glycero-beta-D-manno-heptose 7-phosphate. Its pathway is carbohydrate biosynthesis; D-glycero-D-manno-heptose 7-phosphate biosynthesis; D-glycero-alpha-D-manno-heptose 7-phosphate and D-glycero-beta-D-manno-heptose 7-phosphate from sedoheptulose 7-phosphate: step 1/1. Functionally, catalyzes the isomerization of sedoheptulose 7-phosphate in D-glycero-D-manno-heptose 7-phosphate. The chain is Phosphoheptose isomerase from Bradyrhizobium sp. (strain ORS 278).